The chain runs to 154 residues: Large ribosomal subunit protein eL24 (154 aa).

The segment at 92–154 (AKRNQKPEVR…AAAPRVGGKR (63 aa)) is disordered. Basic and acidic residues predominate over residues 96 to 122 (QKPEVRKAQREQAVKAAKEKKKADQVG). Positions 129-154 (KARATAPKTKAPKTVKAAAPRVGGKR) are enriched in low complexity.

This sequence belongs to the eukaryotic ribosomal protein eL24 family.

This Branchiostoma belcheri (Amphioxus) protein is Large ribosomal subunit protein eL24 (RPL24).